Here is a 519-residue protein sequence, read N- to C-terminus: Cytosol aminopeptidase (519 aa).

Residue Ser-42 is modified to Phosphoserine. An N6-succinyllysine modification is found at Lys-45. Phosphoserine is present on Ser-54. N6-succinyllysine occurs at positions 61 and 103. Phosphoserine is present on residues Ser-180 and Ser-194. Zn(2+) is bound by residues Leu-202, Met-203, and Thr-205. Lys-221 bears the N6-acetyllysine; alternate mark. N6-succinyllysine; alternate is present on Lys-221. Residue Ser-238 is modified to Phosphoserine. Zn(2+) is bound by residues Lys-282 and Asp-287. Residues Lys-282, Asp-287, Ser-292, and Lys-294 each coordinate substrate. Position 287 (Asp-287) interacts with Mg(2+). Residue Lys-294 is part of the active site. Zn(2+) is bound by residues Arg-303, Asp-305, Asp-364, and Glu-366. Substrate contacts are provided by Asp-305 and Asp-364. Positions 364 and 366 each coordinate Mg(2+). Arg-368 is an active-site residue. Lys-455 is subject to N6-acetyllysine; alternate. Position 455 is an N6-succinyllysine; alternate (Lys-455). Lys-476 carries the post-translational modification N6-succinyllysine. Lys-489 is subject to N6-acetyllysine; alternate. At Lys-489 the chain carries N6-succinyllysine; alternate.

The protein belongs to the peptidase M17 family. Homohexamer. Requires Zn(2+) as cofactor. The cofactor is Mn(2+).

Its subcellular location is the cytoplasm. It catalyses the reaction Release of an N-terminal amino acid, Xaa-|-Yaa-, in which Xaa is preferably Leu, but may be other amino acids including Pro although not Arg or Lys, and Yaa may be Pro. Amino acid amides and methyl esters are also readily hydrolyzed, but rates on arylamides are exceedingly low.. The enzyme catalyses an S-substituted L-cysteinylglycine + H2O = an S-substituted L-cysteine + glycine. The catalysed reaction is L-cysteinylglycine + H2O = L-cysteine + glycine. It carries out the reaction S-benzyl-L-cysteinylglycine + H2O = S-benzyl-L-cysteine + glycine. It catalyses the reaction Release of N-terminal proline from a peptide.. In terms of biological role, cytosolic metallopeptidase that catalyzes the removal of unsubstituted N-terminal hydrophobic amino acids from various peptides. The presence of Zn(2+) ions is essential for the peptidase activity, and the association with other cofactors can modulate the substrate spectificity of the enzyme. For instance, in the presence of Mn(2+), it displays a specific Cys-Gly hydrolyzing activity of Cys-Gly-S-conjugates. Involved in the metabolism of glutathione and in the degradation of glutathione S-conjugates, which may play a role in the control of the cell redox status. This is Cytosol aminopeptidase from Sus scrofa (Pig).